The chain runs to 436 residues: Testican-3 (436 aa).

A signal peptide spans 1 to 21; sequence MLKVSAVLCVCAAAWCSQSLA. Intrachain disulfides connect cysteine 90/cysteine 101, cysteine 95/cysteine 111, cysteine 139/cysteine 169, cysteine 142/cysteine 162, cysteine 151/cysteine 183, cysteine 317/cysteine 341, cysteine 352/cysteine 359, and cysteine 361/cysteine 380. One can recognise a Kazal-like domain in the interval 133–185; it reads GPILSTCKQCPVVYPSPVCGSDGHTYSFQCKLEYQACVLGKQISVKCEGHCPC. In terms of domain architecture, Thyroglobulin type-1 spans 314-380; that stretch reads DPPCQTELSN…GSRINGVADC (67 aa). 2 O-linked (Xyl...) (glycosaminoglycan) serine glycosylation sites follow: serine 387 and serine 392. Residues 393–436 are disordered; that stretch reads GDFHEWTDDEDDEDDIMNDEDEIEDDDEDEGDDDDGGDDHDVYI. Acidic residues predominate over residues 399 to 430; it reads TDDEDDEDDIMNDEDEIEDDDEDEGDDDDGGD.

In terms of processing, contains chondroitin sulfate and heparan sulfate O-linked oligosaccharides. Expressed in brain.

The protein localises to the secreted. The protein resides in the extracellular space. It localises to the extracellular matrix. Its function is as follows. May participate in diverse steps of neurogenesis. Inhibits the processing of pro-matrix metalloproteinase 2 (MMP-2) by MT1-MMP and MT3-MMP. May interfere with tumor invasion. In Homo sapiens (Human), this protein is Testican-3 (SPOCK3).